Reading from the N-terminus, the 543-residue chain is CTP synthase (543 aa).

The segment at 1–265 is amidoligase domain; it reads MTRYIFVTGG…DDFVVERFGL (265 aa). Ser-13 serves as a coordination point for CTP. Ser-13 lines the UTP pocket. Residues 14-19 and Asp-71 each bind ATP; that span reads SLGKGI. Mg(2+) contacts are provided by Asp-71 and Glu-139. CTP is bound by residues 146 to 148, 186 to 191, and Lys-222; these read DIE and KTKPTQ. UTP-binding positions include 186–191 and Lys-222; that span reads KTKPTQ. The Glutamine amidotransferase type-1 domain maps to 290-541; the sequence is TIAMVGKYME…VKAALAQHQK (252 aa). An L-glutamine-binding site is contributed by Gly-351. Catalysis depends on Cys-378, which acts as the Nucleophile; for glutamine hydrolysis. Residues 379–382, Glu-402, and Arg-469 each bind L-glutamine; that span reads LGMQ. Active-site residues include His-514 and Glu-516.

This sequence belongs to the CTP synthase family. Homotetramer.

The enzyme catalyses UTP + L-glutamine + ATP + H2O = CTP + L-glutamate + ADP + phosphate + 2 H(+). It carries out the reaction L-glutamine + H2O = L-glutamate + NH4(+). It catalyses the reaction UTP + NH4(+) + ATP = CTP + ADP + phosphate + 2 H(+). It participates in pyrimidine metabolism; CTP biosynthesis via de novo pathway; CTP from UDP: step 2/2. Its activity is regulated as follows. Allosterically activated by GTP, when glutamine is the substrate; GTP has no effect on the reaction when ammonia is the substrate. The allosteric effector GTP functions by stabilizing the protein conformation that binds the tetrahedral intermediate(s) formed during glutamine hydrolysis. Inhibited by the product CTP, via allosteric rather than competitive inhibition. Functionally, catalyzes the ATP-dependent amination of UTP to CTP with either L-glutamine or ammonia as the source of nitrogen. Regulates intracellular CTP levels through interactions with the four ribonucleotide triphosphates. The chain is CTP synthase from Pseudomonas syringae pv. tomato (strain ATCC BAA-871 / DC3000).